The following is a 501-amino-acid chain: G protein-activated inward rectifier potassium channel 1 (501 aa).

Residues 1 to 40 (MSALRRKFGDDYQVVTTSSSGSGLQPQGPGQGPQQQLVPK) form a disordered region. The Cytoplasmic segment spans residues 1-80 (MSALRRKFGD…LFTTLVDLKW (80 aa)). The span at 18 to 37 (SSSGSGLQPQGPGQGPQQQL) shows a compositional bias: low complexity. The chain crosses the membrane as a helical span at residues 81–105 (RWNLFIFILTYTVAWLFMASMWWVI). Residues 106–129 (AYTRGDLNKAHVGNYTPCVANVYN) lie on the Extracellular side of the membrane. An N-linked (GlcNAc...) asparagine glycan is attached at N119. Residues 130–141 (FPSAFLFFIETE) constitute an intramembrane region (helical; Pore-forming). The pore-forming intramembrane region spans 142–148 (ATIGYGY). Positions 143–148 (TIGYGY) match the Selectivity filter motif. Over 149 to 157 (RYITDKCPE) the chain is Extracellular. Residues 158–179 (GIILFLFQSILGSIVDAFLIGC) form a helical membrane-spanning segment. Residues 180–501 (MFIKMSQPKK…LRKMNSDRFT (322 aa)) are Cytoplasmic-facing. Positions 182 to 209 (IKMSQPKKRAETLMFSEHAVISMRDGKL) are polyphosphoinositide (PIP2)-binding. A phosphoserine mark is found at S385 and S424. The span at 456 to 467 (TKMLSDPMSQSV) shows a compositional bias: polar residues. A disordered region spans residues 456–501 (TKMLSDPMSQSVADLPPKLQKMAGGPTRMEGNLPAKLRKMNSDRFT).

The protein belongs to the inward rectifier-type potassium channel (TC 1.A.2.1) family. KCNJ3 subfamily. As to quaternary structure, associates with KCNJ5/GIRK4 or KCNJ6/GIRK2 to form a G-protein activated heteromultimer pore-forming unit. The resulting inward current is much larger. Associates with KCNJ9/GIRK3 to form a G-protein activated heteromultimer pore-forming unit.

It is found in the membrane. The catalysed reaction is K(+)(in) = K(+)(out). Heteromultimer composed of KCNJ3/GIRK1 and KCNJ5/GIRK4 is activated by phosphatidylinositol 4,5 biphosphate (PtdIns(4,5)P2). Its function is as follows. Inward rectifier potassium channels are characterized by a greater tendency to allow potassium to flow into the cell rather than out of it. Their voltage dependence is regulated by the concentration of extracellular potassium; as external potassium is raised, the voltage range of the channel opening shifts to more positive voltages. The inward rectification is mainly due to the blockage of outward current by internal magnesium. This potassium channel is controlled by G proteins. This receptor plays a crucial role in regulating the heartbeat. Forms a functional channel in association with KCNJ9/GIRK3. The polypeptide is G protein-activated inward rectifier potassium channel 1 (Kcnj3) (Rattus norvegicus (Rat)).